A 55-amino-acid chain; its full sequence is Large ribosomal subunit protein bL33 (55 aa).

It belongs to the bacterial ribosomal protein bL33 family.

The protein is Large ribosomal subunit protein bL33 of Paramagnetospirillum magneticum (strain ATCC 700264 / AMB-1) (Magnetospirillum magneticum).